A 509-amino-acid polypeptide reads, in one-letter code: Putative (R)-citramalate synthase CimA (509 aa).

The 254-residue stretch at 14–267 (VRIFDTTLRD…DTGIRTERLT (254 aa)) folds into the Pyruvate carboxyltransferase domain.

Belongs to the alpha-IPM synthase/homocitrate synthase family. In terms of assembly, homodimer.

It catalyses the reaction pyruvate + acetyl-CoA + H2O = (3R)-citramalate + CoA + H(+). Its pathway is amino-acid biosynthesis; L-isoleucine biosynthesis; 2-oxobutanoate from pyruvate: step 1/3. Its function is as follows. Catalyzes the condensation of pyruvate and acetyl-coenzyme A to form (R)-citramalate. This is Putative (R)-citramalate synthase CimA (cimA) from Methanopyrus kandleri (strain AV19 / DSM 6324 / JCM 9639 / NBRC 100938).